A 102-amino-acid polypeptide reads, in one-letter code: Co-chaperonin GroES (102 aa).

It belongs to the GroES chaperonin family. In terms of assembly, heptamer of 7 subunits arranged in a ring. Interacts with the chaperonin GroEL.

It is found in the cytoplasm. Its function is as follows. Together with the chaperonin GroEL, plays an essential role in assisting protein folding. The GroEL-GroES system forms a nano-cage that allows encapsulation of the non-native substrate proteins and provides a physical environment optimized to promote and accelerate protein folding. GroES binds to the apical surface of the GroEL ring, thereby capping the opening of the GroEL channel. The chain is Co-chaperonin GroES from Chlamydia pneumoniae (Chlamydophila pneumoniae).